A 297-amino-acid chain; its full sequence is Formylmethanofuran--tetrahydromethanopterin formyltransferase (297 aa).

The protein belongs to the FTR family. Homotetramer.

The protein localises to the cytoplasm. It carries out the reaction N-formylmethanofuran + 5,6,7,8-tetrahydromethanopterin + H(+) = N(5)-formyl-5,6,7,8-tetrahydromethanopterin + methanofuran. The protein operates within one-carbon metabolism; methanogenesis from CO(2); 5,10-methenyl-5,6,7,8-tetrahydromethanopterin from CO(2): step 2/3. In terms of biological role, catalyzes the reversible transfer of a formyl group from formylmethanofuran (formyl-MFR) to tetrahydromethanopterin (H(4)MPT) to produce 5-formyl tetrahydromethanopterin (5-formyl-H(4)MPT) and methanofuran (MFR). The chain is Formylmethanofuran--tetrahydromethanopterin formyltransferase from Methanococcoides burtonii (strain DSM 6242 / NBRC 107633 / OCM 468 / ACE-M).